Consider the following 336-residue polypeptide: Dihydroorotate dehydrogenase (quinone) (336 aa).

FMN contacts are provided by residues 62-66 and T86; that span reads AGLDK. Position 66 (K66) interacts with substrate. 111 to 115 provides a ligand contact to substrate; sequence NRMGF. Residues N139 and N172 each contribute to the FMN site. N172 is a substrate binding site. S175 (nucleophile) is an active-site residue. N177 contacts substrate. FMN is bound by residues K217 and T245. 246 to 247 provides a ligand contact to substrate; sequence NT. FMN is bound by residues G268, G297, and 318–319; that span reads YS.

Belongs to the dihydroorotate dehydrogenase family. Type 2 subfamily. As to quaternary structure, monomer. FMN serves as cofactor.

The protein resides in the cell membrane. It catalyses the reaction (S)-dihydroorotate + a quinone = orotate + a quinol. The protein operates within pyrimidine metabolism; UMP biosynthesis via de novo pathway; orotate from (S)-dihydroorotate (quinone route): step 1/1. In terms of biological role, catalyzes the conversion of dihydroorotate to orotate with quinone as electron acceptor. This Shigella dysenteriae serotype 1 (strain Sd197) protein is Dihydroorotate dehydrogenase (quinone).